The chain runs to 872 residues: Protein SCD5 (872 aa).

Disordered regions lie at residues 1–98 (MSFD…SGGD) and 209–239 (PKPRPILSSENHEEVYEEVEDDDSSAKTGDQ). Residues 48–85 (FWDQGSRSHSDTTLSYRNNHSNTAADNATNVSSPQKDN) are compositionally biased toward polar residues. Residues 272–276 (KKVRF) carry the KKRVK motif; Required for interaction with GLC7, endocytosis and actin cytoskeleton organization motif. Disordered regions lie at residues 280–321 (ITFQ…LDFT) and 338–358 (SGLVSSLPSEQQETEEEKKVL). 2 stretches are compositionally biased toward polar residues: residues 284 to 296 (DPPNLNQESSNNS) and 339 to 348 (GLVSSLPSEQ). A run of 12 repeats spans residues 405-424 (QLPLEPLKPTATGSANHLVR), 439-458 (QTGLQPLKPTATGSANYLMR), 479-498 (SGGLQPLKPTATGSANYLMK), 534-545 (SPNITLPQSNQQ), 564-575 (SPQHTYSNNVRI), 593-604 (PPQNTLPQHQQS), 608-619 (SPQNTIPQHQRS), 623-634 (SPQNTFTQNQPI), 636-647 (SPQHTYSNNQAT), 650-661 (SPQNTYTNNQQQ), 683-694 (PPQHMYSNVQKQ), and 717-728 (SPQNAANSYFQS). Residues 405–448 (QLPLEPLKPTATGSANHLVREEYNQGLHPSNGAIQTGLQPLKPT) are 3 X 20 AA approximate repeats. 2 positions are modified to phosphothreonine; by PRK1: Thr-416 and Thr-450. The interval 460-489 (HMEQPQSIKPSSTPETVTNSGGLQPLKPTA) is disordered. A compositionally biased stretch (polar residues) spans 462–481 (EQPQSIKPSSTPETVTNSGG). A Phosphothreonine; by PRK1 modification is found at Thr-490. Disordered stretches follow at residues 516–571 (QFTN…TYSN) and 591–620 (AFPPQNTLPQHQQSHLLSPQNTIPQHQRSQ). The interval 534 to 728 (SPNITLPQSN…QNAANSYFQS (195 aa)) is 9 X 12 AA approximate repeats. Ser-564 carries the post-translational modification Phosphoserine. A compositionally biased stretch (polar residues) spans 594 to 620 (PQNTLPQHQQSHLLSPQNTIPQHQRSQ). Residues 649-681 (ISPQNTYTNNQQQPQHLPPPPPPRAQQQQQGAI) form a disordered region. A compositionally biased stretch (low complexity) spans 651–663 (PQNTYTNNQQQPQ). Positions 697 to 727 (LVPTQPSYTNSPSIQSPNFLSPQNAANSYFQ) are enriched in polar residues. Disordered regions lie at residues 697–758 (LVPT…ISSF) and 806–838 (NSDIHSQPNKPNYGMLGQQVHQQQQQQQQQFPF). Residues 728–745 (SLLSSSPSPNPTPSNAST) show a composition bias toward low complexity. Composition is skewed to polar residues over residues 746–758 (VNGNNASNGISSF) and 806–815 (NSDIHSQPNK). Residues 823–835 (QQVHQQQQQQQQQ) show a composition bias toward low complexity.

Interacts (via KKVRF motif) with phosphatase GLC7. Phosphorylation by PRK1 and/or AKL1 on Thr-416, Thr-450 and Thr-490 of repeats 1-1, 1-2 and/or 1-3 negatively regulates SCD5 function in endocytosis and actin cytoskeleton organization.

It localises to the membrane. Regulates both fluid phase and receptor-mediated endocytosis. Involved in vesicular transport at a late stage of the secretory pathway. Regulates actin cytoskeleton organization. The polypeptide is Protein SCD5 (SCD5) (Saccharomyces cerevisiae (strain ATCC 204508 / S288c) (Baker's yeast)).